The primary structure comprises 143 residues: Large ribosomal subunit protein uL15 (143 aa).

It belongs to the universal ribosomal protein uL15 family. In terms of assembly, part of the 50S ribosomal subunit.

Binds to the 23S rRNA. The chain is Large ribosomal subunit protein uL15 from Methanococcus aeolicus (strain ATCC BAA-1280 / DSM 17508 / OCM 812 / Nankai-3).